The primary structure comprises 625 residues: Probable potassium transport system protein Kup 2 (625 aa).

12 consecutive transmembrane segments (helical) span residues 15–35 (LSFA…LYAF), 52–72 (ILSL…LVIV), 98–118 (GGWL…DGML), 134–154 (LSPN…FFLF), 164–184 (IGVY…ILGF), 212–232 (FALF…ALFA), 246–266 (WFAV…AFVL), 284–304 (FLPV…QAII), 336–356 (VYLP…VVIF), 365–385 (AYGI…GIIA), 394–414 (FKIL…AGNI), and 417–437 (LLTG…VMYT).

This sequence belongs to the HAK/KUP transporter (TC 2.A.72) family.

It localises to the cell inner membrane. It carries out the reaction K(+)(in) + H(+)(in) = K(+)(out) + H(+)(out). Functionally, transport of potassium into the cell. Likely operates as a K(+):H(+) symporter. In Legionella pneumophila (strain Paris), this protein is Probable potassium transport system protein Kup 2.